A 193-amino-acid chain; its full sequence is MSTPPLAASGMAPGPFAGPQAQQAAREVNTASLCRIGQETVQDIVYRTMEIFQLLRNMQLPNGVTYHTGTYQDRLAKLQDHLRQLSILFRKLRLVYDKCNENCGGMDPIPVEQLIPYVEEDGSKDDRAGPPRFASEERREIAEVNKFQVNSKGTQPYLHMYPFSSKLPSHSGCRIPLSRIPCAVQNSNRRINS.

The disordered stretch occupies residues 1–20 (MSTPPLAASGMAPGPFAGPQ). Ser2 carries the post-translational modification N-acetylserine. Low complexity predominate over residues 10 to 20 (GMAPGPFAGPQ). A coiled-coil region spans residues 71–93 (YQDRLAKLQDHLRQLSILFRKLR).

Belongs to the Mediator complex subunit 30 family. In terms of assembly, component of the Mediator complex, which is composed of MED1, MED4, MED6, MED7, MED8, MED9, MED10, MED11, MED12, MED13, MED13L, MED14, MED15, MED16, MED17, MED18, MED19, MED20, MED21, MED22, MED23, MED24, MED25, MED26, MED27, MED29, MED30, MED31, CCNC, CDK8 and CDC2L6/CDK11. The MED12, MED13, CCNC and CDK8 subunits form a distinct module termed the CDK8 module. Mediator containing the CDK8 module is less active than Mediator lacking this module in supporting transcriptional activation. Individual preparations of the Mediator complex lacking one or more distinct subunits have been variously termed ARC, CRSP, DRIP, PC2, SMCC and TRAP.

The protein localises to the nucleus. In terms of biological role, component of the Mediator complex, a coactivator involved in the regulated transcription of nearly all RNA polymerase II-dependent genes. Mediator functions as a bridge to convey information from gene-specific regulatory proteins to the basal RNA polymerase II transcription machinery. Mediator is recruited to promoters by direct interactions with regulatory proteins and serves as a scaffold for the assembly of a functional preinitiation complex with RNA polymerase II and the general transcription factors. This chain is Mediator of RNA polymerase II transcription subunit 30 (MED30), found in Bos taurus (Bovine).